We begin with the raw amino-acid sequence, 427 residues long: Adenylosuccinate synthetase (427 aa).

GTP-binding positions include 12-18 and 40-42; these read GDEGKGK and GHT. Asp-13 serves as the catalytic Proton acceptor. Positions 13 and 40 each coordinate Mg(2+). Residues 13–16, 38–41, Thr-127, Arg-141, Gln-222, Thr-237, and Arg-301 each bind IMP; these read DEGK and NAGH. Residue His-41 is the Proton donor of the active site. 297–303 provides a ligand contact to substrate; sequence VVTKRPR. GTP contacts are provided by residues Arg-303, 329 to 331, and 411 to 413; these read SLD and AVG.

It belongs to the adenylosuccinate synthetase family. As to quaternary structure, homodimer. The cofactor is Mg(2+).

The protein localises to the cytoplasm. The catalysed reaction is IMP + L-aspartate + GTP = N(6)-(1,2-dicarboxyethyl)-AMP + GDP + phosphate + 2 H(+). The protein operates within purine metabolism; AMP biosynthesis via de novo pathway; AMP from IMP: step 1/2. Functionally, plays an important role in the de novo pathway of purine nucleotide biosynthesis. Catalyzes the first committed step in the biosynthesis of AMP from IMP. This is Adenylosuccinate synthetase from Leuconostoc citreum (strain KM20).